Consider the following 422-residue polypeptide: UDP-N-acetylglucosamine 1-carboxyvinyltransferase (422 aa).

Phosphoenolpyruvate is bound at residue 22–23; the sequence is KN. Arginine 94 is a binding site for UDP-N-acetyl-alpha-D-glucosamine. The Proton donor role is filled by cysteine 118. Cysteine 118 is subject to 2-(S-cysteinyl)pyruvic acid O-phosphothioketal. Residues 123–127, aspartate 309, and leucine 331 contribute to the UDP-N-acetyl-alpha-D-glucosamine site; that span reads RPIDL.

This sequence belongs to the EPSP synthase family. MurA subfamily.

The protein localises to the cytoplasm. The catalysed reaction is phosphoenolpyruvate + UDP-N-acetyl-alpha-D-glucosamine = UDP-N-acetyl-3-O-(1-carboxyvinyl)-alpha-D-glucosamine + phosphate. Its pathway is cell wall biogenesis; peptidoglycan biosynthesis. In terms of biological role, cell wall formation. Adds enolpyruvyl to UDP-N-acetylglucosamine. This Sulfurimonas denitrificans (strain ATCC 33889 / DSM 1251) (Thiomicrospira denitrificans (strain ATCC 33889 / DSM 1251)) protein is UDP-N-acetylglucosamine 1-carboxyvinyltransferase.